The sequence spans 118 residues: Large ribosomal subunit protein bL20 (118 aa).

It belongs to the bacterial ribosomal protein bL20 family.

Functionally, binds directly to 23S ribosomal RNA and is necessary for the in vitro assembly process of the 50S ribosomal subunit. It is not involved in the protein synthesizing functions of that subunit. This is Large ribosomal subunit protein bL20 from Campylobacter concisus (strain 13826).